Reading from the N-terminus, the 85-residue chain is Probable oxaloacetate decarboxylase gamma chain (85 aa).

The helical transmembrane segment at 11–33 (AAALMVTGMGVVFIFLTILIFLV) threads the bilayer.

Belongs to the OadG family. As to quaternary structure, heterotrimer of an alpha, a beta and a gamma subunit. It depends on Na(+) as a cofactor.

The protein localises to the cell membrane. It catalyses the reaction oxaloacetate + 2 Na(+)(in) + H(+) = pyruvate + 2 Na(+)(out) + CO2. In terms of biological role, catalyzes the decarboxylation of oxaloacetate coupled to Na(+) translocation. The protein is Probable oxaloacetate decarboxylase gamma chain of Vibrio vulnificus (strain CMCP6).